We begin with the raw amino-acid sequence, 154 residues long: Host transcription reprogramming factor 5 (154 aa).

A signal peptide spans 1-19; it reads MQILRIAQLMALLATCASA. The segment at 24-85 is disordered; sequence TGSRVYSRDV…KRIKAEQNAR (62 aa). Over residues 35 to 50 the composition is skewed to polar residues; the sequence is QTQGGFSGSPTTNSPD. Basic and acidic residues predominate over residues 69–85; sequence ETEKERKKRIKAEQNAR. The C2H2-type; degenerate zinc finger occupies 96 to 121; that stretch reads YQCPYCSDPTVFSHSDALGRHIYTIH.

Its subcellular location is the secreted. It is found in the host nucleus. Its function is as follows. Probable secreted effector that translocates into the nuclei of host cells to reprogram the expression of targeted genes by binding on effector binding elements in rice. The chain is Host transcription reprogramming factor 5 from Pyricularia oryzae (strain 70-15 / ATCC MYA-4617 / FGSC 8958) (Rice blast fungus).